We begin with the raw amino-acid sequence, 317 residues long: 17-beta-hydroxysteroid dehydrogenase type 6 (317 aa).

The signal sequence occupies residues 1 to 17 (MWLYLAVLLGLYYLLRW). NAD(+) is bound at residue 33-57 (FITGCDSGFGNQLARQLDLRGLRVL). N-linked (GlcNAc...) asparagine glycans are attached at residues Asn71 and Asn161. Ser164 contacts substrate. Tyr176 acts as the Proton acceptor in catalysis.

It belongs to the short-chain dehydrogenases/reductases (SDR) family.

It localises to the microsome membrane. The protein resides in the endoplasmic reticulum membrane. It carries out the reaction all-trans-retinol--[retinol-binding protein] + NAD(+) = all-trans-retinal--[retinol-binding protein] + NADH + H(+). It catalyses the reaction all-trans-retinol + NAD(+) = all-trans-retinal + NADH + H(+). The enzyme catalyses androsterone + NAD(+) = 5alpha-androstan-3,17-dione + NADH + H(+). The catalysed reaction is testosterone + NAD(+) = androst-4-ene-3,17-dione + NADH + H(+). It carries out the reaction 5alpha-androstane-3alpha,17beta-diol + NAD(+) = 17beta-hydroxy-5alpha-androstan-3-one + NADH + H(+). It catalyses the reaction 17beta-estradiol + NAD(+) = estrone + NADH + H(+). The enzyme catalyses 17beta-estradiol + NADP(+) = estrone + NADPH + H(+). The catalysed reaction is 3alpha-hydroxy-5alpha-pregnan-20-one + NAD(+) = 5alpha-pregnane-3,20-dione + NADH + H(+). It carries out the reaction 5alpha-androstane-3beta,17beta-diol + NAD(+) = 17beta-hydroxy-5alpha-androstan-3-one + NADH + H(+). It catalyses the reaction 3beta-hydroxy-5alpha-androstan-17-one + NAD(+) = 5alpha-androstan-3,17-dione + NADH + H(+). Its function is as follows. NAD-dependent oxidoreductase with broad substrate specificity that shows both oxidative and reductive activity (in vitro). Has 17-beta-hydroxysteroid dehydrogenase activity towards various steroids (in vitro). Converts 5-alpha-androstan-3-alpha,17-beta-diol to androsterone and estradiol to estrone (in vitro). Has 3-alpha-hydroxysteroid dehydrogenase activity towards androsterone (in vitro). Has retinol dehydrogenase activity towards all-trans-retinol (in vitro). Can convert androsterone to epi-androsterone. Androsterone is first oxidized to 5-alpha-androstane-3,17-dione and then reduced to epi-andosterone. Can act on both C-19 and C-21 3-alpha-hydroxysteroids. This is 17-beta-hydroxysteroid dehydrogenase type 6 (HSD17B6) from Bos taurus (Bovine).